A 77-amino-acid chain; its full sequence is Acyl carrier protein (77 aa).

The Carrier domain occupies 2-77 (ADTLERVTKI…DAVNYIQNQQ (76 aa)). The residue at position 37 (S37) is an O-(pantetheine 4'-phosphoryl)serine.

This sequence belongs to the acyl carrier protein (ACP) family. Post-translationally, 4'-phosphopantetheine is transferred from CoA to a specific serine of apo-ACP by AcpS. This modification is essential for activity because fatty acids are bound in thioester linkage to the sulfhydryl of the prosthetic group.

The protein localises to the cytoplasm. Its pathway is lipid metabolism; fatty acid biosynthesis. Functionally, carrier of the growing fatty acid chain in fatty acid biosynthesis. In Bacillus subtilis (strain 168), this protein is Acyl carrier protein (acpA).